The chain runs to 326 residues: Histone-lysine N-methyltransferase Suv4-20 (326 aa).

An SET domain is found at 163 to 273; the sequence is QECTRYSLEG…AGDEITCFYG (111 aa). Residues 294 to 313 are disordered; the sequence is RGKFSTSDEEENDEPSALSE.

The protein belongs to the class V-like SAM-binding methyltransferase superfamily. Histone-lysine methyltransferase family. Suvar4-20 subfamily.

The protein resides in the nucleus. Its subcellular location is the chromosome. It catalyses the reaction N(6)-methyl-L-lysyl(20)-[histone H4] + S-adenosyl-L-methionine = N(6),N(6)-dimethyl-L-lysyl(20)-[histone H4] + S-adenosyl-L-homocysteine + H(+). It carries out the reaction N(6),N(6)-dimethyl-L-lysyl(20)-[histone H4] + S-adenosyl-L-methionine = N(6),N(6),N(6)-trimethyl-L-lysyl(20)-[histone H4] + S-adenosyl-L-homocysteine + H(+). Histone methyltransferase that specifically di- and trimethylates 'Lys-20' of histone H4 (H4K20me2/me3). H4 'Lys-20' trimethylation represents a specific tag for epigenetic transcriptional repression. Contributes to dosage compensation of X chromosome-relative to autosome-linked gene expression, possibly by converting H4K20me1 to H4K20m2/me3 on autosomes. Involved in the regulation of growth and body fat metabolism downstream of the TOR complex 2 pathway. The polypeptide is Histone-lysine N-methyltransferase Suv4-20 (Caenorhabditis briggsae).